Consider the following 132-residue polypeptide: UPF0299 membrane protein YohJ (132 aa).

Helical transmembrane passes span Ile-7 to Phe-27, Leu-31 to Ala-51, Gly-63 to Met-83, and Phe-93 to Trp-113.

The protein belongs to the UPF0299 family.

The protein localises to the cell inner membrane. The chain is UPF0299 membrane protein YohJ from Shigella dysenteriae serotype 1 (strain Sd197).